Here is a 58-residue protein sequence, read N- to C-terminus: Proteinase inhibitor PSKP-1 (58 aa).

One can recognise a Kazal-like domain in the interval Val1 to Cys58. 3 cysteine pairs are disulfide-bonded: Cys6–Cys36, Cys14–Cys33, and Cys22–Cys58.

Monomer. Skin.

It is found in the secreted. Its function is as follows. Has antibacterial activity against Gram-negative bacterium E.coli ATCC 11229. Shows hemagglutinating activity. Inhibits prolyl endopeptidase, but not trypsin, chymotrypsin, V8 protease and proteinase K. May have a role in mucosal defense against microbes by interacting directly with their membranes. In Phyllomedusa sauvagei (Sauvage's leaf frog), this protein is Proteinase inhibitor PSKP-1.